A 291-amino-acid chain; its full sequence is Protein SpdB (291 aa).

3 helical membrane-spanning segments follow: residues 24–44 (VVVI…LVVG), 71–91 (ITGV…AHAL), and 99–119 (WLAV…HGLW).

It is found in the cell membrane. Functionally, involved in plasmid transfer. This Streptomyces lividans protein is Protein SpdB (spdB).